Consider the following 553-residue polypeptide: Formate--tetrahydrofolate ligase (553 aa).

56 to 63 lines the ATP pocket; sequence TPKGEGKT.

The protein belongs to the formate--tetrahydrofolate ligase family.

It carries out the reaction (6S)-5,6,7,8-tetrahydrofolate + formate + ATP = (6R)-10-formyltetrahydrofolate + ADP + phosphate. It participates in one-carbon metabolism; tetrahydrofolate interconversion. This Haloarcula marismortui (strain ATCC 43049 / DSM 3752 / JCM 8966 / VKM B-1809) (Halobacterium marismortui) protein is Formate--tetrahydrofolate ligase.